A 350-amino-acid chain; its full sequence is Melatonin receptor type 1A-A (350 aa).

Topologically, residues 1–29 are extracellular; the sequence is MFMNGSSLNSSALDPSEQALQRPPWVTTT. N4 and N9 each carry an N-linked (GlcNAc...) asparagine glycan. Residues 30 to 50 traverse the membrane as a helical segment; it reads LGCFLIFTIVVDILGNLLVIF. The Cytoplasmic segment spans residues 51-63; it reads SVYRNKKLQNAGN. Residues 64–84 form a helical membrane-spanning segment; the sequence is IFVVSLAVADLVVAIYPYPLV. The Extracellular portion of the chain corresponds to 85-101; sequence LTSIFHRGWNLGYMHCQ. A disulfide bridge links C100 with C177. The chain crosses the membrane as a helical span at residues 102-122; the sequence is ISGFLMGVSVIGSIFNITGIA. Topologically, residues 123-144 are cytoplasmic; it reads INCYCYICHSLKYDKLYSDKNS. Residues 145–165 form a helical membrane-spanning segment; it reads VCYVLLIWALTVLAIVPNLFV. Residues 166 to 187 lie on the Extracellular side of the membrane; it reads GSLQYDPRVYSCTFEQSASSAY. A helical membrane pass occupies residues 188-208; the sequence is TIAVVFFHFILPIMIVTYCYL. Residues 209 to 240 are Cytoplasmic-facing; sequence RIWVLVIQVRRRVKNDNRPKITPHDVRNFVTM. Residues 241 to 261 form a helical membrane-spanning segment; that stretch reads FVVFVLFAVCWAPLNFIGLAV. The Extracellular portion of the chain corresponds to 262-267; that stretch reads AISPER. Residues 268-288 form a helical membrane-spanning segment; that stretch reads VVPLIPEWLFVASYFMAYFNS. At 289 to 350 the chain is on the cytoplasmic side; sequence CLNAIVYGVL…NNNQVKVDSV (62 aa).

Belongs to the G-protein coupled receptor 1 family.

Its subcellular location is the cell membrane. In terms of biological role, high affinity receptor for melatonin. The activity of this receptor is mediated by pertussis toxin sensitive G proteins that inhibits adenylate cyclase activity. The sequence is that of Melatonin receptor type 1A-A (mtnr1aa) from Danio rerio (Zebrafish).